The primary structure comprises 451 residues: Tubulin alpha chain (451 aa).

GTP is bound at residue Gln11. Lys40 carries the N6-acetyllysine modification. GTP contacts are provided by Glu71, Ser140, Gly144, Thr145, Thr179, Asn206, and Asn228. Glu71 lines the Mg(2+) pocket. Glu254 is an active-site residue.

It belongs to the tubulin family. In terms of assembly, dimer of alpha and beta chains. A typical microtubule is a hollow water-filled tube with an outer diameter of 25 nm and an inner diameter of 15 nM. Alpha-beta heterodimers associate head-to-tail to form protofilaments running lengthwise along the microtubule wall with the beta-tubulin subunit facing the microtubule plus end conferring a structural polarity. Microtubules usually have 13 protofilaments but different protofilament numbers can be found in some organisms and specialized cells. The cofactor is Mg(2+). In terms of processing, undergoes a tyrosination/detyrosination cycle, the cyclic removal and re-addition of a C-terminal tyrosine residue by the enzymes tubulin tyrosine carboxypeptidase (TTCP) and tubulin tyrosine ligase (TTL), respectively. Post-translationally, acetylation of alpha chains at Lys-40 stabilizes microtubules and affects affinity and processivity of microtubule motors. This modification has a role in multiple cellular functions, ranging from cell motility, cell cycle progression or cell differentiation to intracellular trafficking and signaling. As to expression, actively expressed in the lens but does not seem to be lens-specific.

The protein resides in the cytoplasm. The protein localises to the cytoskeleton. It catalyses the reaction GTP + H2O = GDP + phosphate + H(+). In terms of biological role, tubulin is the major constituent of microtubules, a cylinder consisting of laterally associated linear protofilaments composed of alpha- and beta-tubulin heterodimers. Microtubules grow by the addition of GTP-tubulin dimers to the microtubule end, where a stabilizing cap forms. Below the cap, tubulin dimers are in GDP-bound state, owing to GTPase activity of alpha-tubulin. This Enteroctopus dofleini (North Pacific giant octopus) protein is Tubulin alpha chain.